A 340-amino-acid chain; its full sequence is Ketol-acid reductoisomerase (NADP(+)) (340 aa).

Positions 3–182 (VQMEYEKDVK…GAARVGLLET (180 aa)) constitute a KARI N-terminal Rossmann domain. NADP(+) contacts are provided by residues 26-29 (YGSQ), R49, S53, and 83-86 (DEIQ). The active site involves H108. G134 provides a ligand contact to NADP(+). A KARI C-terminal knotted domain is found at 183 to 328 (TYKEETEEDL…AELRKAMPFV (146 aa)). Residues D191, E195, E227, and E231 each coordinate Mg(2+). S252 serves as a coordination point for substrate.

The protein belongs to the ketol-acid reductoisomerase family. Mg(2+) is required as a cofactor.

It carries out the reaction (2R)-2,3-dihydroxy-3-methylbutanoate + NADP(+) = (2S)-2-acetolactate + NADPH + H(+). The enzyme catalyses (2R,3R)-2,3-dihydroxy-3-methylpentanoate + NADP(+) = (S)-2-ethyl-2-hydroxy-3-oxobutanoate + NADPH + H(+). It participates in amino-acid biosynthesis; L-isoleucine biosynthesis; L-isoleucine from 2-oxobutanoate: step 2/4. It functions in the pathway amino-acid biosynthesis; L-valine biosynthesis; L-valine from pyruvate: step 2/4. Functionally, involved in the biosynthesis of branched-chain amino acids (BCAA). Catalyzes an alkyl-migration followed by a ketol-acid reduction of (S)-2-acetolactate (S2AL) to yield (R)-2,3-dihydroxy-isovalerate. In the isomerase reaction, S2AL is rearranged via a Mg-dependent methyl migration to produce 3-hydroxy-3-methyl-2-ketobutyrate (HMKB). In the reductase reaction, this 2-ketoacid undergoes a metal-dependent reduction by NADPH to yield (R)-2,3-dihydroxy-isovalerate. The polypeptide is Ketol-acid reductoisomerase (NADP(+)) (Streptococcus pneumoniae (strain Hungary19A-6)).